A 207-amino-acid chain; its full sequence is Glutathione S-transferase P (207 aa).

A GST N-terminal domain is found at 1–78; sequence PPYTITYFPV…HLGRSFGLYG (78 aa). Y3 is modified (phosphotyrosine; by EGFR). Glutathione is bound by residues Y7, R13, W38, K42, and 49–50; that span reads QL. T59 carries the post-translational modification Phosphothreonine. Residue 62–63 coordinates glutathione; that stretch reads QS. A GST C-terminal domain is found at 80–201; the sequence is DQKEAALVDM…ASPEHVNRPI (122 aa). An N6-succinyllysine mark is found at K100 and K113. K125 is subject to N6-acetyllysine.

It belongs to the GST superfamily. Pi family. In terms of assembly, homodimer. Interacts with CDK5.

Its subcellular location is the cytoplasm. It localises to the mitochondrion. The protein resides in the nucleus. The enzyme catalyses RX + glutathione = an S-substituted glutathione + a halide anion + H(+). It catalyses the reaction prostaglandin J2 + glutathione = prostaglandin J2-S-(R)-glutathione. It carries out the reaction prostaglandin J2 + glutathione = prostaglandin J2-S-(S)-glutathione. The catalysed reaction is prostaglandin A2 + glutathione = prostaglandin A2-S-(S)-glutathione. The enzyme catalyses 11(S)-hydroxy-14(S),15(S)-epoxy-(5Z,8Z,12E)-eicosatrienoate + glutathione = (11S,15S)-dihydroxy-14(R)-S-glutathionyl-(5Z,8Z,12E)-eicosatrienoate. Functionally, conjugation of reduced glutathione to a wide number of exogenous and endogenous hydrophobic electrophiles. Involved in the formation of glutathione conjugates of both prostaglandin A2 (PGA2) and prostaglandin J2 (PGJ2). Participates in the formation of novel hepoxilin regioisomers. Negatively regulates CDK5 activity via p25/p35 translocation to prevent neurodegeneration. The polypeptide is Glutathione S-transferase P (GSTP1) (Sus scrofa (Pig)).